Here is an 848-residue protein sequence, read N- to C-terminus: Translation initiation factor IF-2 (848 aa).

Residues 1 to 10 show a composition bias toward basic and acidic residues; sequence MSENNNDKIT. Disordered stretches follow at residues 1-79 and 121-163; these read MSEN…EKPV and AERQ…LFSS. The segment covering 17–33 has biased composition (polar residues); the sequence is LKRSGSETNTVKQNFNH. Residues 121-138 show a composition bias toward basic and acidic residues; it reads AERQAAEKQAKESEEGLH. The span at 149-163 shows a compositional bias: polar residues; it reads KSSSNTTKPTPLFSS. The region spanning 346 to 513 is the tr-type G domain; sequence TRPPIVTIMG…AILLQAEILD (168 aa). The interval 355-362 is G1; sequence GHVDHGKT. Position 355–362 (355–362) interacts with GTP; it reads GHVDHGKT. The segment at 380–384 is G2; the sequence is GITQH. The tract at residues 401 to 404 is G3; that stretch reads DTPG. GTP-binding positions include 401 to 405 and 455 to 458; these read DTPGH and NKID. The tract at residues 455–458 is G4; the sequence is NKID. The interval 491 to 493 is G5; that stretch reads SAK.

This sequence belongs to the TRAFAC class translation factor GTPase superfamily. Classic translation factor GTPase family. IF-2 subfamily.

Its subcellular location is the cytoplasm. In terms of biological role, one of the essential components for the initiation of protein synthesis. Protects formylmethionyl-tRNA from spontaneous hydrolysis and promotes its binding to the 30S ribosomal subunits. Also involved in the hydrolysis of GTP during the formation of the 70S ribosomal complex. The protein is Translation initiation factor IF-2 of Bartonella bacilliformis (strain ATCC 35685 / KC583 / Herrer 020/F12,63).